A 528-amino-acid chain; its full sequence is Protein WHAT'S THIS FACTOR 1 homolog, chloroplastic (528 aa).

Residues 1–73 (MEPKLLLSAH…KTRVVVEPVR (73 aa)) constitute a chloroplast transit peptide. The PORR domain occupies 80-408 (KELTFDSVVQ…VKEKMRALVS (329 aa)). Positions 410–528 (PRFPRRGGPR…FPDGTPREKW (119 aa)) are disordered. Over residues 418–428 (PRKDEEGREVE) the composition is skewed to basic and acidic residues. Acidic residues predominate over residues 429-491 (IDGSDADGEE…DDDDEDEEED (63 aa)).

The protein resides in the plastid. Its subcellular location is the chloroplast. In terms of biological role, RNA-binding protein involved in group II intron splicing. Binds specific group II introns and promotes their splicing. Functions in the context of a heterodimer with the ribonuclease III domain-containing protein RNC1. The sequence is that of Protein WHAT'S THIS FACTOR 1 homolog, chloroplastic from Arabidopsis thaliana (Mouse-ear cress).